The following is a 187-amino-acid chain: Nodulin-related protein 1 (187 aa).

Position 1 is an N-acetylmethionine (M1). Disordered regions lie at residues 1-66 (MDFF…ATNA) and 132-176 (YETS…HGFG). The segment covering 7–48 (QVKKKFSDKKPESSDPEPNHNKNKPGHTEPTTHKPGHGEPTT) has biased composition (basic and acidic residues). The segment covering 142–158 (GGTGSHGNVGGHGGGAG) has biased composition (gly residues).

In terms of assembly, interacts with RPS2. In terms of tissue distribution, expressed in roots, leaves, flowers and siliques.

Its function is as follows. Prevents accumulation of abscisic acid (ABA) after heat treatment, thus reducing thermotolerance. May be a negative regulator of the ABA signaling/synthesis pathway. Required for defense responses against avirulent bacteria such as P.syringae pv. tomato DC3000 (avrRpt2). In Arabidopsis thaliana (Mouse-ear cress), this protein is Nodulin-related protein 1.